An 841-amino-acid chain; its full sequence is mRNA export factor ICP27 homolog (841 aa).

Disordered regions lie at residues 12–82 (PFAG…QYDK) and 115–163 (RAQG…TSPD). The segment covering 32–49 (YSQQQSQHYYYGHNQSSY) has biased composition (low complexity). Pro residues predominate over residues 66 to 79 (MPPPLSSPSSPPPQ). The segment covering 132–147 (SSLVSSNNSNNNTTLS) has biased composition (low complexity). 4 residues coordinate Zn(2+): Cys-298, His-411, Cys-413, and Cys-418. A CHC2-type zinc finger spans residues 298-418 (CLLDSPGGGG…PGHRCQNEIC (121 aa)). Disordered regions lie at residues 444-749 (HPNG…DDLH) and 774-811 (SVTP…TDQP). Basic and acidic residues predominate over residues 495-507 (VDSRGGGGDRRGD). A compositionally biased stretch (basic residues) spans 514-526 (NHHRHHTRRARTR). A compositionally biased stretch (basic and acidic residues) spans 553–563 (RRGEAQRESNG). Low complexity-rich tracts occupy residues 568–579 (KSPSTVSSTTVH) and 591–603 (SRKS…QPET). Pro residues predominate over residues 614–623 (MPPPPSPCSP). Basic and acidic residues predominate over residues 641-657 (RPHDPPSGEPADAEKEL). A compositionally biased stretch (low complexity) spans 688–699 (DSSSSSSDSSSS). Over residues 708–731 (EDCRELDLQSKRLEEALEERCERD) the composition is skewed to basic and acidic residues. Acidic residues-rich tracts occupy residues 732–749 (FEAD…DDLH) and 793–809 (DAEE…DETD).

It belongs to the HHV-1 ICP27 protein family.

The protein resides in the virion tegument. Its subcellular location is the virion. The protein localises to the host nucleus. It localises to the host cytoplasm. In terms of biological role, immediate early (EI) protein that plays many roles during productive infection including regulation of viral gene expression and nuclear export of intronless viral RNAs. This Mus musculus (Mouse) protein is mRNA export factor ICP27 homolog.